The chain runs to 359 residues: Protein Wnt-2 (359 aa).

The first 25 residues, 1-25 (MNAPLAGIWPWLPLLWAWLVPEVSS), serve as a signal peptide directing secretion. Disulfide bonds link Cys-75-Cys-86, Cys-126-Cys-134, Cys-136-Cys-156, Cys-205-Cys-219, Cys-207-Cys-214, Cys-277-Cys-308, Cys-293-Cys-303, Cys-307-Cys-347, Cys-323-Cys-338, Cys-325-Cys-335, and Cys-330-Cys-331. A lipid anchor (O-palmitoleoyl serine; by PORCN) is attached at Ser-211. Asn-294 is a glycosylation site (N-linked (GlcNAc...) asparagine).

This sequence belongs to the Wnt family. In terms of processing, palmitoleoylation is required for efficient binding to frizzled receptors. Depalmitoleoylation leads to Wnt signaling pathway inhibition.

The protein localises to the secreted. It localises to the extracellular space. It is found in the extracellular matrix. In terms of biological role, ligand for members of the frizzled family of seven transmembrane receptors. Probable developmental protein. May be a signaling molecule which affects the development of discrete regions of tissues. Is likely to signal over only few cell diameters. This is Protein Wnt-2 (WNT2) from Echinops telfairi (Lesser hedgehog tenrec).